The following is an 89-amino-acid chain: Small ribosomal subunit protein uS17 (89 aa).

Belongs to the universal ribosomal protein uS17 family. As to quaternary structure, part of the 30S ribosomal subunit.

In terms of biological role, one of the primary rRNA binding proteins, it binds specifically to the 5'-end of 16S ribosomal RNA. The chain is Small ribosomal subunit protein uS17 from Nocardia farcinica (strain IFM 10152).